The following is a 1114-amino-acid chain: Zinc finger E-box-binding homeobox 1 (1114 aa).

Disordered regions lie at residues 1 to 105 and 142 to 163; these read MADG…EVGC and APEE…NGTP. Residues 15–30 show a composition bias toward low complexity; it reads PRRNNVTNYNNVIEAN. Positions 149 to 160 are enriched in polar residues; the sequence is QGTPEASGQDEN. 3 consecutive C2H2-type zinc fingers follow at residues 170-193, 200-222, and 240-262; these read LTCP…KYRH, FSCS…MTSH, and FKCT…LRIH. The C2H2-type 4; atypical zinc finger occupies 268-292; it reads YECPNCKKRFSHSGSYSSHISSKKC. 4 disordered regions span residues 304-326, 491-529, 553-588, and 636-716; these read SGLK…PARP, NLKK…TNDS, KNPP…GQPP, and QISV…SRNS. Over residues 309-326 the composition is skewed to low complexity; it reads SQCSSPSLSASPGSPARP. The span at 504–523 shows a compositional bias: basic and acidic residues; the sequence is KNEKLPEDLTVKSEKDKNFE. Composition is skewed to polar residues over residues 573–584 and 636–681; these read APSETGENNLSP and QISV…QNPA. Positions 581-640 form a DNA-binding region, homeobox; atypical; that stretch reads NLSPGQPPLKNLLSLLKAYYALNAQPSAEELSKIADSVNLPLDVVKKWFEKMQAGQISVQ. A compositionally biased stretch (low complexity) spans 682 to 716; that stretch reads NTSKSQTSSGGSTQNGSRSSTPSPSPLNLSSSRNS. The CTBP-binding motif motif lies at 767-771; the sequence is PLNLT. 2 stretches are compositionally biased toward polar residues: residues 852–866 and 874–890; these read AVQE…ANGS and SSEG…SDST. The interval 852-898 is disordered; it reads AVQETPPKQTQANGSQDERQDTSSEGVSNVEDQNDSDSTPPKKKMRK. C2H2-type zinc fingers lie at residues 904–926 and 932–954; these read YACD…KYEH and HECG…MRLH. The segment at 960 to 981 adopts a C2H2-type 7; atypical zinc-finger fold; that stretch reads YQCDKCGKRFSHSGSYSQHMNH. Positions 989–1114 are disordered; it reads EAEERDSTEQ…QVSEEKTNKA (126 aa). Over residues 1031–1047 the composition is skewed to acidic residues; the sequence is EEEEDSEKEEEEEEEKD. Over residues 1048–1062 the composition is skewed to basic and acidic residues; the sequence is VEGLQEEKECRKLQD. Residues 1063 to 1078 are compositionally biased toward acidic residues; that stretch reads VEEEEEVEEEEEEEEG. Residues 1079–1089 are compositionally biased toward basic and acidic residues; sequence KTEGNKNDDVV.

The protein belongs to the delta-EF1/ZFH-1 C2H2-type zinc-finger family. In terms of tissue distribution, expression is developmentally regulated with high expression in mesoderm, nervous system and lens.

Its subcellular location is the nucleus. Acts as a transcriptional repressor. Positively regulates neuronal differentiation. Represses transcription by binding to the E box-containing promoter. Binds to delta 1-crystallin enhancer core and represses lens-specific transcription. It also binds many other non-lens specific DNA sequences. In Gallus gallus (Chicken), this protein is Zinc finger E-box-binding homeobox 1 (ZEB1).